The chain runs to 583 residues: SHC-transforming protein 1 (583 aa).

M1 is subject to N-acetylmethionine. Residues 1–92 (MDLLPPKPKY…EPGRAADDGE (92 aa)) form a disordered region. Residues 16–44 (ESLSSLEEGASGSTPPEELPSPSASSLGP) show a composition bias toward low complexity. Phosphoserine occurs at positions 36 and 139. Residue K154 is modified to N6-acetyllysine. The PID domain maps to 156 to 339 (MGPGVSYLVR…AGFDGSAWDE (184 aa)). Residues 340–487 (EEEEPPDHQY…SMAEQLRGEP (148 aa)) form a CH1 region. 2 positions are modified to phosphotyrosine: Y349 and Y350. Positions 372–384 (AAPGAARPTAPNA) are enriched in low complexity. A disordered region spans residues 372–415 (AAPGAARPTAPNAQTPSHLGATLPVGQPVGGDPEVRKQMPPPPP). Y427 carries the post-translational modification Phosphotyrosine. S453 bears the Phosphoserine mark. The 92-residue stretch at 488-579 (WFHGKLSRRE…GSELCLQQPV (92 aa)) folds into the SH2 domain.

As to quaternary structure, interacts with CPNE3; this interaction may mediate the binding of CPNE3 with ERBB2. Interacts with the NPXY motif of tyrosine-phosphorylated IGF1R and INSR in vitro via the PID domain. Once activated, binds to GRB2. Interacts with tyrosine-phosphorylated CD3T and DDR2. Interacts with the N-terminal region of SH2B2. Interacts with phosphorylated LRP1 and IRS4. Interacts with INPP5D/SHIP1 and INPPL1/SHIP2. Interacts with TRIM31. Interacts with PTPN6/SHP (tyrosine phosphorylated). Identified in a complex containing FGFR4, NCAM1, CDH2, PLCG1, FRS2, SRC, SHC1, GAP43 and CTT. Interacts with ALK, GAB2, GRB7 and KIT. Interacts with FLT4 (tyrosine-phosphorylated). Interacts with EPHB1 and GRB2; activates the MAPK/ERK cascade to regulate cell migration. Interacts with PDGFRB (tyrosine-phosphorylated). Interacts with ERBB4. Interacts with TEK/TIE2 (tyrosine-phosphorylated). Interacts with the Trk receptors NTRK1, NTRK2 and NTRK3; in a phosphotyrosine-dependent manner. Interacts with PTK2/FAK1. Interacts with CEACAM1; this interaction is CEACAM1-phosphorylation-dependent and mediates interaction with EGFR or INSR resulting in decrease coupling of SHC1 to the MAPK3/ERK1-MAPK1/ERK2 pathway. Interacts (via PID domain) with PEAK1 (when phosphorylated at 'Tyr-1188'). Found in a complex with PPP1CA, PPP1CC, SHC1 and PEAK1. (Microbial infection) Interacts with herpes simplex virus 1 UL46. Post-translationally, phosphorylated by activated epidermal growth factor receptor. Phosphorylated in response to FLT4 and KIT signaling. Isoform p46Shc and isoform p52Shc are phosphorylated on tyrosine residues of the Pro-rich domain. Isoform p66Shc is phosphorylated on Ser-36 by PRKCB upon treatment with insulin, hydrogen peroxide or irradiation with ultraviolet light. Tyrosine phosphorylated in response to FLT3 signaling. Tyrosine phosphorylated by activated PTK2B/PYK2. Tyrosine phosphorylated by ligand-activated ALK. Tyrosine phosphorylated by ligand-activated PDGFRB. Tyrosine phosphorylated by TEK/TIE2. May be tyrosine phosphorylated by activated PTK2/FAK1; tyrosine phosphorylation was seen in an astrocytoma biopsy, where PTK2/FAK1 kinase activity is high, but not in normal brain tissue. Isoform p52Shc dephosphorylation by PTPN2 may regulate interaction with GRB2. As to expression, widely expressed. Expressed in neural stem cells but absent in mature neurons.

It localises to the cytoplasm. The protein localises to the cell junction. The protein resides in the focal adhesion. Its subcellular location is the mitochondrion matrix. It is found in the mitochondrion. In terms of biological role, signaling adapter that couples activated growth factor receptors to signaling pathways. Participates in a signaling cascade initiated by activated KIT and KITLG/SCF. Isoform p46Shc and isoform p52Shc, once phosphorylated, couple activated receptor tyrosine kinases to Ras via the recruitment of the GRB2/SOS complex and are implicated in the cytoplasmic propagation of mitogenic signals. Isoform p46Shc and isoform p52Shc may thus function as initiators of the Ras signaling cascade in various non-neuronal systems. Isoform p66Shc does not mediate Ras activation, but is involved in signal transduction pathways that regulate the cellular response to oxidative stress and life span. Isoform p66Shc acts as a downstream target of the tumor suppressor p53 and is indispensable for the ability of stress-activated p53 to induce elevation of intracellular oxidants, cytochrome c release and apoptosis. The expression of isoform p66Shc has been correlated with life span. Participates in signaling downstream of the angiopoietin receptor TEK/TIE2, and plays a role in the regulation of endothelial cell migration and sprouting angiogenesis. This is SHC-transforming protein 1 (SHC1) from Homo sapiens (Human).